The following is a 397-amino-acid chain: Succinate--CoA ligase [ADP-forming] subunit beta (397 aa).

The ATP-grasp domain occupies 9–254; that stretch reads KALLKGYGAP…ETEEDAKEIE (246 aa). ATP-binding positions include Lys46, 53–55, Glu109, Ala112, and Glu117; that span reads GRG. Mg(2+) is bound by residues Asn209 and Asp223. Substrate-binding positions include Asn274 and 331–333; that span reads GIM.

This sequence belongs to the succinate/malate CoA ligase beta subunit family. Heterotetramer of two alpha and two beta subunits. The cofactor is Mg(2+).

It catalyses the reaction succinate + ATP + CoA = succinyl-CoA + ADP + phosphate. The enzyme catalyses GTP + succinate + CoA = succinyl-CoA + GDP + phosphate. It participates in carbohydrate metabolism; tricarboxylic acid cycle; succinate from succinyl-CoA (ligase route): step 1/1. Its function is as follows. Succinyl-CoA synthetase functions in the citric acid cycle (TCA), coupling the hydrolysis of succinyl-CoA to the synthesis of either ATP or GTP and thus represents the only step of substrate-level phosphorylation in the TCA. The beta subunit provides nucleotide specificity of the enzyme and binds the substrate succinate, while the binding sites for coenzyme A and phosphate are found in the alpha subunit. In Rhizobium etli (strain ATCC 51251 / DSM 11541 / JCM 21823 / NBRC 15573 / CFN 42), this protein is Succinate--CoA ligase [ADP-forming] subunit beta.